The chain runs to 437 residues: MISTQYLIPTYWHRCSISEQLTLLTRPINKHNNSIHLDVKYILDHVSKLGDNALIKFNLQFDYVNTISLKISPNKIINSGNSLSKPIKKAIHSAIDNITRFHTAQYFPKVDLEIIPGVRCKQIIRPLHTIGLYVPGGSTPLPSTVMMLGIPAKIAQCKRIILCSPPPIPNIILYTAQLCGIEEIYQVGGAQAIAAMGFGTESIPRVDKIFGPGNIWVTEAKRQIHYITNKVAIDMLAGPSEILIIADKTANPIFIAADLLSQAEHGPDSHIILITPDMNLAQQTRQELYKQIQNLDRIDIIHQSLTHARIIITDNIMECFQISNDYAPEHLLIQTQNPENYLKYITNAGSIFLGHWSPESAGDYASGTNHVLPTYGHATTTSALGVADFQKRILVQELTQHGLLQLSSTIQTLTKIEKLKAHEYSVIHRINYIKGTT.

NAD(+) is bound by residues Tyr133, Gln191, and Asn214. Residues Ser240, Gln262, and His265 each coordinate substrate. Zn(2+)-binding residues include Gln262 and His265. Catalysis depends on proton acceptor residues Glu329 and His330. Substrate is bound by residues His330, Asp363, Glu417, and His422. Asp363 lines the Zn(2+) pocket. His422 contributes to the Zn(2+) binding site.

The protein belongs to the histidinol dehydrogenase family. Homodimer. Zn(2+) serves as cofactor.

The catalysed reaction is L-histidinol + 2 NAD(+) + H2O = L-histidine + 2 NADH + 3 H(+). Its pathway is amino-acid biosynthesis; L-histidine biosynthesis; L-histidine from 5-phospho-alpha-D-ribose 1-diphosphate: step 9/9. Functionally, catalyzes the sequential NAD-dependent oxidations of L-histidinol to L-histidinaldehyde and then to L-histidine. This is Histidinol dehydrogenase from Blochmanniella floridana.